The following is a 426-amino-acid chain: 3-phosphoshikimate 1-carboxyvinyltransferase (426 aa).

Lysine 20, serine 21, and arginine 25 together coordinate 3-phosphoshikimate. Residue lysine 20 participates in phosphoenolpyruvate binding. Positions 92 and 120 each coordinate phosphoenolpyruvate. 3-phosphoshikimate-binding residues include serine 165, glutamine 167, aspartate 313, and lysine 340. Glutamine 167 contacts phosphoenolpyruvate. Residue aspartate 313 is the Proton acceptor of the active site. Arginine 344 and arginine 386 together coordinate phosphoenolpyruvate.

This sequence belongs to the EPSP synthase family. In terms of assembly, monomer.

Its subcellular location is the cytoplasm. The enzyme catalyses 3-phosphoshikimate + phosphoenolpyruvate = 5-O-(1-carboxyvinyl)-3-phosphoshikimate + phosphate. It functions in the pathway metabolic intermediate biosynthesis; chorismate biosynthesis; chorismate from D-erythrose 4-phosphate and phosphoenolpyruvate: step 6/7. Its function is as follows. Catalyzes the transfer of the enolpyruvyl moiety of phosphoenolpyruvate (PEP) to the 5-hydroxyl of shikimate-3-phosphate (S3P) to produce enolpyruvyl shikimate-3-phosphate and inorganic phosphate. This chain is 3-phosphoshikimate 1-carboxyvinyltransferase, found in Brevibacillus brevis (strain 47 / JCM 6285 / NBRC 100599).